Here is a 478-residue protein sequence, read N- to C-terminus: Transposon Ty1-H Gag polyprotein (478 aa).

Polar residues-rich tracts occupy residues 1-10 (MESQQLSNYP), 48-60 (TKAN…TPAS), and 127-152 (QSQF…GNTF). 3 disordered regions span residues 1-84 (MESQ…QNGP), 126-174 (PQSQ…PPPM), and 390-478 (GSRN…PETY). Residues 153-165 (TDSSSADSDMTST) show a composition bias toward low complexity. The tract at residues 337-439 (NNGIHINNKV…NSKSKTARAH (103 aa)) is RNA-binding. Positions 440 to 456 (NVSTSNNSPSTDNDSIS) are enriched in low complexity. The segment covering 457 to 466 (KSTTEPIQLN) has biased composition (polar residues). The segment covering 467-478 (NKHDLHLRPETY) has biased composition (basic and acidic residues).

As to quaternary structure, homotrimer.

It localises to the cytoplasm. In terms of biological role, capsid protein (CA) is the structural component of the virus-like particle (VLP), forming the shell that encapsulates the retrotransposons dimeric RNA genome. The particles are assembled from trimer-clustered units and there are holes in the capsid shells that allow for the diffusion of macromolecules. CA also has nucleocapsid-like chaperone activity, promoting primer tRNA(i)-Met annealing to the multipartite primer-binding site (PBS), dimerization of Ty1 RNA and initiation of reverse transcription. This chain is Transposon Ty1-H Gag polyprotein (TY1A-H), found in Saccharomyces cerevisiae (strain ATCC 204508 / S288c) (Baker's yeast).